A 905-amino-acid polypeptide reads, in one-letter code: Clumping factor B (905 aa).

The first 44 residues, 1–44, serve as a signal peptide directing secretion; sequence MKKRIDYLSNKQNKYSIRRFTVGTTSVIVGATILFGIGNHQAQA. The YSIRK-G/S signaling motif motif lies at 15 to 26; it reads YSIRRFTVGTTS. 2 stretches are compositionally biased toward polar residues: residues 44-61 and 68-101; these read ASEQ…NASA and MIET…KPMS. The tract at residues 44 to 191 is disordered; the sequence is ASEQSNDTTQ…AQGTSKPSVR (148 aa). The ligand binding A region stretch occupies residues 45-542; sequence SEQSNDTTQS…GSADGDSAVN (498 aa). The segment covering 102–119 has biased composition (low complexity); the sequence is TQTSNTTTTEPASTNETP. Residues 134 to 189 are compositionally biased toward polar residues; it reads QDQTVPQEANSQVDNKTTNDANSIATNSELKNPQTLDLPQSSPQTISNAQGTSKPS. The MIDAS-like motif motif lies at 272–276; the sequence is DYSNS. The interval 530-877 is disordered; the sequence is YGGGSADGDS…ETGDKSENTN (348 aa). Positions 545–555 are enriched in pro residues; that stretch reads DPTPGPPVDPE. Over residues 556–829 the composition is skewed to acidic residues; it reads PSPDPEPEPS…SDSDSDSDSD (274 aa). The span at 833–844 shows a compositional bias: polar residues; the sequence is RVTPPNNEQKAP. Positions 861 to 874 are enriched in basic and acidic residues; the sequence is HKTDALPETGDKSE. An LPXTG sorting signal motif is present at residues 866 to 870; the sequence is LPETG. The residue at position 869 (T869) is a Pentaglycyl murein peptidoglycan amidated threonine. The propeptide at 870-905 is removed by sortase; the sequence is GDKSENTNATLFGAMMALLGSLLLFRKRKQDHKEKA.

This sequence belongs to the serine-aspartate repeat-containing protein (SDr) family. Post-translationally, proteolytically cleaved by aureolysin (aur). This cleavage leads to the inactivation of ClfB.

The protein resides in the secreted. Its subcellular location is the cell wall. Cell surface-associated protein implicated in virulence by promoting bacterial attachment to both alpha- and beta-chains of human fibrinogen and inducing the formation of bacterial clumps. This chain is Clumping factor B (clfB), found in Staphylococcus aureus (strain MSSA476).